The chain runs to 865 residues: Bifunctional uridylyltransferase/uridylyl-removing enzyme (865 aa).

A uridylyltransferase region spans residues 1-318 (MPHVDLNPLK…FPRPDSDARL (318 aa)). The tract at residues 319–675 (IDDDFRNLRE…VRPTEHGEGL (357 aa)) is uridylyl-removing. The 123-residue stretch at 437-559 (VDQHTLAVVR…VGDERRLAAL (123 aa)) folds into the HD domain. 2 ACT domains span residues 676–762 (QVMV…RLPH) and 789–865 (RLSV…QQAA). The disordered stretch occupies residues 747–767 (DPHAARHAHAPRRLPHSHARR). The span at 751 to 767 (ARHAHAPRRLPHSHARR) shows a compositional bias: basic residues.

Belongs to the GlnD family. Mg(2+) is required as a cofactor.

It catalyses the reaction [protein-PII]-L-tyrosine + UTP = [protein-PII]-uridylyl-L-tyrosine + diphosphate. The enzyme catalyses [protein-PII]-uridylyl-L-tyrosine + H2O = [protein-PII]-L-tyrosine + UMP + H(+). Its activity is regulated as follows. Uridylyltransferase (UTase) activity is inhibited by glutamine, while glutamine activates uridylyl-removing (UR) activity. In terms of biological role, modifies, by uridylylation and deuridylylation, the PII regulatory proteins (GlnB and homologs), in response to the nitrogen status of the cell that GlnD senses through the glutamine level. Under low glutamine levels, catalyzes the conversion of the PII proteins and UTP to PII-UMP and PPi, while under higher glutamine levels, GlnD hydrolyzes PII-UMP to PII and UMP (deuridylylation). Thus, controls uridylylation state and activity of the PII proteins, and plays an important role in the regulation of nitrogen assimilation and metabolism. The protein is Bifunctional uridylyltransferase/uridylyl-removing enzyme of Bordetella parapertussis (strain 12822 / ATCC BAA-587 / NCTC 13253).